The primary structure comprises 419 residues: Dual specificity protein phosphatase 7 (419 aa).

The tract at residues 1–41 (MKNQLRGPPVRAHMSTSGAAAAGGTRAGSEPGAGSGSSAGI) is disordered. Positions 15-30 (STSGAAAAGGTRAGSE) are enriched in low complexity. Positions 31 to 41 (PGAGSGSSAGI) are enriched in gly residues. The region spanning 68–187 (GGASLLLLDC…FQTEYSEHCE (120 aa)) is the Rhodanese domain. Residues 216 to 240 (CSDGESDRELPSSATESDGSPVPSS) form a disordered region. The span at 227–240 (SSATESDGSPVPSS) shows a compositional bias: polar residues. Residues 244–387 (FPVQILPYLY…LLDFERTLGL (144 aa)) form the Tyrosine-protein phosphatase domain. Cys331 serves as the catalytic Phosphocysteine intermediate. 331–337 (CLAGISR) is a substrate binding site.

The protein belongs to the protein-tyrosine phosphatase family. Non-receptor class dual specificity subfamily. In terms of assembly, interacts with MAPK1/ERK2; the interaction enhances DUSP7 phosphatase activity.

The protein localises to the cytoplasm. The catalysed reaction is O-phospho-L-tyrosyl-[protein] + H2O = L-tyrosyl-[protein] + phosphate. It carries out the reaction O-phospho-L-seryl-[protein] + H2O = L-seryl-[protein] + phosphate. The enzyme catalyses O-phospho-L-threonyl-[protein] + H2O = L-threonyl-[protein] + phosphate. Strongly inhibited by sodium orthovanadate. Functionally, dual specificity protein phosphatase. Shows high activity towards MAPK1/ERK2. Also has lower activity towards MAPK14 and MAPK8. In arrested oocytes, plays a role in meiotic resumption. Promotes nuclear envelope breakdown and activation of the CDK1/Cyclin-B complex in oocytes, probably by dephosphorylating and inactivating the conventional protein kinase C (cPKC) isozyme PRKCB. May also inactivate PRKCA and/or PRKCG. Also important in oocytes for normal chromosome alignment on the metaphase plate and progression to anaphase, where it might regulate activity of the spindle-assembly checkpoint (SAC) complex. The sequence is that of Dual specificity protein phosphatase 7 from Rattus norvegicus (Rat).